A 1162-amino-acid chain; its full sequence is PAN2-PAN3 deadenylation complex catalytic subunit PAN2 (1162 aa).

WD repeat units follow at residues 27–66 (AKEKSATKMAFDQDVNLIWVGDTYGRVSSYDPSYSLYTRH), 153–193 (NTVQ…VVKT), 196–233 (GHSCMVSSMDFRDHTLVTAGKSKRFNMMYPDQFVNVYD), and 300–339 (HPCQSVTQLQLSPSGDYIAFIEHDNNINMWSRSNGMTGFT). The interval 341 to 491 (TATTILEYPD…LMNYKPSNDR (151 aa)) is linker. The tract at residues 401-443 (VPLPPKSSAASSSHTALSTSSDSRPNTARSGNPSSGGQKYRLL) is disordered. The segment covering 407-423 (SSAASSSHTALSTSSDS) has biased composition (low complexity). The segment covering 424–437 (RPNTARSGNPSSGG) has biased composition (polar residues). Residues 492–904 (EVPPAFTKLQ…TPEIAIYSDA (413 aa)) enclose the USP domain. Residues 956-1126 (VALDAEFVAL…IEDAYTALVL (171 aa)) form the Exonuclease domain. 4 residues coordinate a divalent metal cation: Asp959, Glu961, Asp1068, and Asp1119.

It belongs to the peptidase C19 family. PAN2 subfamily. Forms a heterotrimer with an asymmetric homodimer of the regulatory subunit PAN3 to form the poly(A)-nuclease (PAN) deadenylation complex. A divalent metal cation is required as a cofactor.

It localises to the cytoplasm. It carries out the reaction Exonucleolytic cleavage of poly(A) to 5'-AMP.. With respect to regulation, positively regulated by the regulatory subunit PAN3. Functionally, catalytic subunit of the poly(A)-nuclease (PAN) deadenylation complex, one of two cytoplasmic mRNA deadenylases involved in mRNA turnover. PAN specifically shortens poly(A) tails of RNA and the activity is stimulated by poly(A)-binding protein PAB1. PAN deadenylation is followed by rapid degradation of the shortened mRNA tails by the CCR4-NOT complex. Deadenylated mRNAs are then degraded by two alternative mechanisms, namely exosome-mediated 3'-5' exonucleolytic degradation, or deadenylation-dependent mRNA decaping and subsequent 5'-3' exonucleolytic degradation by XRN1. May also be involved in post-transcriptional maturation of mRNA poly(A) tails. This chain is PAN2-PAN3 deadenylation complex catalytic subunit PAN2, found in Eremothecium gossypii (strain ATCC 10895 / CBS 109.51 / FGSC 9923 / NRRL Y-1056) (Yeast).